A 315-amino-acid polypeptide reads, in one-letter code: Glutamyl-Q tRNA(Asp) synthetase (315 aa).

L-glutamate is bound by residues Arg-12–Ser-16 and Glu-48. Positions Pro-15–Ser-25 match the 'HIGH' region motif. Cys-104, Cys-106, Tyr-124, and Cys-128 together coordinate Zn(2+). Residues Tyr-181 and Arg-199 each coordinate L-glutamate. The 'KMSKS' region motif lies at Lys-237–Gln-241. ATP is bound at residue Lys-240.

This sequence belongs to the class-I aminoacyl-tRNA synthetase family. GluQ subfamily. The cofactor is Zn(2+).

Functionally, catalyzes the tRNA-independent activation of glutamate in presence of ATP and the subsequent transfer of glutamate onto a tRNA(Asp). Glutamate is transferred on the 2-amino-5-(4,5-dihydroxy-2-cyclopenten-1-yl) moiety of the queuosine in the wobble position of the QUC anticodon. This chain is Glutamyl-Q tRNA(Asp) synthetase, found in Aromatoleum aromaticum (strain DSM 19018 / LMG 30748 / EbN1) (Azoarcus sp. (strain EbN1)).